A 427-amino-acid polypeptide reads, in one-letter code: Adenylosuccinate synthetase (427 aa).

Residues 12-18 and 40-42 contribute to the GTP site; these read GDEGKGK and GHT. D13 functions as the Proton acceptor in the catalytic mechanism. Mg(2+) contacts are provided by D13 and G40. IMP is bound by residues 13–16, 38–41, T128, R142, Q223, T238, and R302; these read DEGK and NAGH. The active-site Proton donor is the H41. 298–304 provides a ligand contact to substrate; the sequence is TTTGRPR. Residues R304, 330–332, and 412–414 each bind GTP; these read KLD and AVG.

This sequence belongs to the adenylosuccinate synthetase family. In terms of assembly, homodimer. Mg(2+) serves as cofactor.

It localises to the cytoplasm. The enzyme catalyses IMP + L-aspartate + GTP = N(6)-(1,2-dicarboxyethyl)-AMP + GDP + phosphate + 2 H(+). Its pathway is purine metabolism; AMP biosynthesis via de novo pathway; AMP from IMP: step 1/2. Functionally, plays an important role in the de novo pathway of purine nucleotide biosynthesis. Catalyzes the first committed step in the biosynthesis of AMP from IMP. This Moorella thermoacetica (strain ATCC 39073 / JCM 9320) protein is Adenylosuccinate synthetase.